The sequence spans 168 residues: Vasopressin-neurophysin 2-copeptin (168 aa).

The N-terminal stretch at 1-23 (MLARMLNTTLSACFLSLLAFSSA) is a signal peptide. Cysteines 24 and 29 form a disulfide. G32 carries the glycine amide modification. Intrachain disulfides connect C45-C89, C48-C62, C56-C79, C63-C69, C96-C108, C102-C120, and C109-C114. N135 is a glycosylation site (N-linked (GlcNAc...) asparagine).

It belongs to the vasopressin/oxytocin family. As to quaternary structure, interacts with vasopressin receptors V1bR/AVPR1B (Ki=85 pM), V1aR/AVPR1A (Ki=0.6 nM) and V2R/AVPR2 (Ki=4.9 nM). Interacts with oxytocin receptor (OXTR) (Ki=110 nM).

Its subcellular location is the secreted. Neurophysin 2 specifically binds vasopressin. Its function is as follows. Vasopressin has a direct antidiuretic action on the kidney, it also causes vasoconstriction of the peripheral vessels. Acts by binding to vasopressin receptors (V1bR/AVPR1B, V1aR/AVPR1A, and V2R/AVPR2). The chain is Vasopressin-neurophysin 2-copeptin (Avp) from Mus musculus (Mouse).